The primary structure comprises 629 residues: MAGSAVDSANHLTYFFGNITREEAEDYLVQGGMTDGLYLLRQSRNYLGGFALSVAHNRKAHHYTIERELNGTYAISGGRAHASPADLCHYHSQEPDGLICLLKKPFNRPPGVQPKTGPFEDLKENLIREYVKQTWNLQGQALEQAIISQKPQLEKLIATTAHEKMPWFHGNISRDESEQTVLIGSKTNGKFLIRARDNSGSYALCLLHEGKVLHYRIDRDKTGKLSIPEGKKFDTLWQLVEHYSYKPDGLLRVLTVPCQKIGAQMGHPGSPNAHPVTWSPGGIISRIKSYSFPKPGHKKPAPPQGSRPESTVSFNPYEPTGGPWGPDRGLQREALPMDTEVYESPYADPEEIRPKEVYLDRSLLTLEDNELGSGNFGTVKKGYYQMKKVVKTVAVKILKNEANDPALKDELLAEANVMQQLDNPYIVRMIGICEAESWMLVMEMAELGPLNKYLQQNRHIKDKNIIELVHQVSMGMKYLEESNFVHRDLAARNVLLVTQHYAKISDFGLSKALRADENYYKAQTHGKWPVKWYAPECINYYKFSSKSDVWSFGVLMWEAFSYGQKPYRGMKGSEVTAMLEKGERMGCPAGCPREMYDLMNLCWTYDVENRPGFTAVELRLRNYYYDVVN.

Positions 14 to 106 constitute an SH2 1 domain; the sequence is YFFGNITREE…GLICLLKKPF (93 aa). Position 27 is a phosphotyrosine (Tyr-27). Residue Ser-43 is modified to Phosphoserine. Phosphotyrosine occurs at positions 46 and 130. The interval 107–166 is interdomain A; the sequence is NRPPGVQPKTGPFEDLKENLIREYVKQTWNLQGQALEQAIISQKPQLEKLIATTAHEKMP. The SH2 2 domain occupies 167-258; sequence WFHGNISRDE…GLLRVLTVPC (92 aa). The residue at position 201 (Ser-201) is a Phosphoserine. Thr-255 bears the Phosphothreonine mark. Positions 259 to 364 are interdomain B; the sequence is QKIGAQMGHP…KEVYLDRSLL (106 aa). Residues Ser-270 and Ser-289 each carry the phosphoserine modification. Phosphotyrosine is present on Tyr-290. Residues Ser-291 and Ser-310 each carry the phosphoserine modification. The disordered stretch occupies residues 293 to 328; that stretch reads PKPGHKKPAPPQGSRPESTVSFNPYEPTGGPWGPDR. Thr-311 carries the phosphothreonine modification. The residue at position 313 (Ser-313) is a Phosphoserine. Position 317 is a phosphotyrosine; by LYN (Tyr-317). Position 339 is a phosphothreonine (Thr-339). Tyr-342 carries the post-translational modification Phosphotyrosine. The residue at position 344 (Ser-344) is a Phosphoserine. Tyr-346 and Tyr-358 each carry phosphotyrosine. In terms of domain architecture, Protein kinase spans 365 to 625; that stretch reads TLEDNELGSG…VELRLRNYYY (261 aa). Residues 371–379 and Lys-396 each bind ATP; that span reads LGSGNFGTV. Position 373 is a phosphoserine (Ser-373). Thr-378 is subject to Phosphothreonine. Residue Tyr-478 is modified to Phosphotyrosine. The active-site Proton acceptor is the Asp-488. Tyr-501 carries the phosphotyrosine modification. Residue Tyr-519 is modified to Phosphotyrosine; by autocatalysis. Tyr-520 carries the phosphotyrosine modification. At Thr-524 the chain carries Phosphothreonine. Position 540 is a phosphotyrosine (Tyr-540). The residue at position 573 (Ser-573) is a Phosphoserine. Thr-576 is modified (phosphothreonine). A phosphotyrosine mark is found at Tyr-623, Tyr-624, and Tyr-625.

The protein belongs to the protein kinase superfamily. Tyr protein kinase family. SYK/ZAP-70 subfamily. In terms of assembly, interacts with LYN; phosphorylates SYK. Interacts with RHOH (phosphorylated); regulates mast cells activation. Interacts with NFAM1 (phosphorylated); probably involved in BCR signaling. Interacts with VAV1 (via SH2 domain); phosphorylates VAV1 upon BCR activation. Interacts with GAB2 (phosphorylated); probably involved in IgE Fc receptor signaling. Interacts (via its SH2 domains) with CD79A (via its phosphorylated ITAM domain); the interaction stimulates SYK autophosphorylation and activation. Interacts (via SH2 domains) with FCER1G (via ITAM domain); activates SYK and mediates neutrophils and macrophages integrin-mediated activation. Interaction with FCER1G in basophils triggers IL3-induced IL4 production. Interacts with ITGB2 and FGR; involved in ITGB2 downstream signaling. Interacts with ITGB3; upon activation by ITGB3 promotes platelet adhesion. Interacts (via SH2 domains) with TYROBP (via ITAM domain); involved in neutrophils and macrophages integrin-mediated activation. Interacts with MSN and SELPLG; mediates the selectin-dependent activation of SYK by SELPLG. Interacts with BLNK (via SH2 domain). Interacts (via the second SH2 domain) with USP25 (via C-terminus); phosphorylates USP25 and regulates USP25 intracellular levels. Interacts (via SH2 domains) with CLEC1B (dimer). Interacts with CLEC7A; participates in leukocyte activation in presence of fungal pathogens. Interacts (phosphorylated) with SLA; may regulate SYK through CBL recruitment. Interacts with YWHAG; attenuates BCR-induced membrane translocation and activation of SYK. Interacts (via SH2 domains) with GCSAM; the interaction increases after B-cell receptor stimulation, resulting in enhanced SYK autophosphorylation and activity. Interacts with TNS2; leading to the phosphorylation of SYK. Interacts with FLNA (via filamin repeat 5); docks SYK to the plasma membrane. Interacts with CEACAM1; lipopolysaccharide activated neutrophils induce phosphorylation of SYK resulting in the formation of a complex including TLR4 and the phosphorylated form of SYK and CEACAM1, which in turn, recruits PTPN6 that dephosphorylates SYK, reducing the production of reactive oxygen species (ROS) and lysosome disruption, leading to a reduction of the inflammasome activity. Interacts (via SH2 domains) with CEACAM20 (phosphorylated form); the interaction further enhances CEACAM20 phosphorylation. Interacts with IL15RA. Interacts with MPL/TPOR; this interaction negatively regulates THPO-mediated ERK1/2 signaling. Autophosphorylated. Phosphorylated on tyrosine residues by LYN following receptors engagement. Phosphorylation on Tyr-317 creates a binding site for CBL, an adapter protein that serves as a negative regulator of BCR-stimulated calcium ion signaling. Phosphorylation at Tyr-342 creates a binding site for VAV1. Phosphorylation on Tyr-342 and Tyr-346 enhances the phosphorylation and activation of phospholipase C-gamma and the early phase of calcium ion mobilization via a phosphoinositide 3-kinase-independent pathway. Phosphorylated on tyrosine residues in response to IL15. Phosphorylation on Ser-291 is very common, it peaks 5 minutes after BCR stimulation, and creates a binding site for YWHAG. Phosphorylation at Tyr-624 creates a binding site for BLNK. Dephosphorylated by PTPN6. In terms of processing, ubiquitinated by CBLB after BCR activation; which promotes proteasomal degradation.

Its subcellular location is the cell membrane. The protein resides in the cytoplasm. The protein localises to the cytosol. It localises to the cytoplasmic vesicle. It is found in the phagosome. The enzyme catalyses L-tyrosyl-[protein] + ATP = O-phospho-L-tyrosyl-[protein] + ADP + H(+). With respect to regulation, autoinhibited. Intramolecular binding of the interdomains A and B (also called linker region) to parts of the catalytic domain keep the catalytic center in an inactive conformation. The phosphorylation of the interdomains or the binding of the SH2 domains with dually phosphorylated ITAM domains on transmembrane proteins disrupt those intramolecular interactions allowing the kinase domain to adopt an active conformation. The phosphorylation of SYK and of the ITAM domains which is responsible for SYK activation is essentially mediated by SRC subfamily kinases, like LYN, upon transmembrane receptors engagement. May also be negatively regulated by PTPN6 through dephosphorylation. Downstream signaling adapters and intermediates like BLNK or RHOH may mediate positive and/or negative feedback regulation. Negatively regulated by CBL and CBLB through ubiquitination and probable degradation. Phosphorylates SH3BP2 which in turn may regulate SYK through LYN. Functionally, non-receptor tyrosine kinase which mediates signal transduction downstream of a variety of transmembrane receptors including classical immunoreceptors like the B-cell receptor (BCR). Regulates several biological processes including innate and adaptive immunity, cell adhesion, osteoclast maturation, platelet activation and vascular development. Assembles into signaling complexes with activated receptors at the plasma membrane via interaction between its SH2 domains and the receptor tyrosine-phosphorylated ITAM domains. The association with the receptor can also be indirect and mediated by adapter proteins containing ITAM or partial hemITAM domains. The phosphorylation of the ITAM domains is generally mediated by SRC subfamily kinases upon engagement of the receptor. More rarely signal transduction via SYK could be ITAM-independent. Direct downstream effectors phosphorylated by SYK include DEPTOR, VAV1, PLCG1, PI-3-kinase, LCP2 and BLNK. Initially identified as essential in B-cell receptor (BCR) signaling, it is necessary for the maturation of B-cells most probably at the pro-B to pre-B transition. Activated upon BCR engagement, it phosphorylates and activates BLNK an adapter linking the activated BCR to downstream signaling adapters and effectors. It also phosphorylates and activates PLCG1 and the PKC signaling pathway. It also phosphorylates BTK and regulates its activity in B-cell antigen receptor (BCR)-coupled signaling. In addition to its function downstream of BCR also plays a role in T-cell receptor signaling. Plays also a crucial role in the innate immune response to fungal, bacterial and viral pathogens. It is for instance activated by the membrane lectin CLEC7A. Upon stimulation by fungal proteins, CLEC7A together with SYK activates immune cells inducing the production of ROS. Also activates the inflammasome and NF-kappa-B-mediated transcription of chemokines and cytokines in presence of pathogens. Regulates neutrophil degranulation and phagocytosis through activation of the MAPK signaling cascade. Required for the stimulation of neutrophil phagocytosis by IL15. Also mediates the activation of dendritic cells by cell necrosis stimuli. Also involved in mast cells activation. Involved in interleukin-3/IL3-mediated signaling pathway in basophils. Also functions downstream of receptors mediating cell adhesion. Relays for instance, integrin-mediated neutrophils and macrophages activation and P-selectin receptor/SELPG-mediated recruitment of leukocytes to inflammatory loci. Also plays a role in non-immune processes. It is for instance involved in vascular development where it may regulate blood and lymphatic vascular separation. It is also required for osteoclast development and function. Functions in the activation of platelets by collagen, mediating PLCG2 phosphorylation and activation. May be coupled to the collagen receptor by the ITAM domain-containing FCER1G. Also activated by the membrane lectin CLEC1B that is required for activation of platelets by PDPN/podoplanin. Involved in platelet adhesion being activated by ITGB3 engaged by fibrinogen. Together with CEACAM20, enhances production of the cytokine CXCL8/IL-8 via the NFKB pathway and may thus have a role in the intestinal immune response. The protein is Tyrosine-protein kinase SYK (Syk) of Mus musculus (Mouse).